A 520-amino-acid chain; its full sequence is Alkyl hydroperoxide reductase subunit F (520 aa).

Residue 213–228 (DVLVVGGGPAGAAAAI) coordinates FAD. Cys-343 and Cys-346 are joined by a disulfide. Position 355-369 (355-369 (RVAVIGGGNSGVEAA)) interacts with NAD(+). Position 476 to 486 (476 to 486 (TSIPGVFAAGD)) interacts with FAD.

This sequence belongs to the class-II pyridine nucleotide-disulfide oxidoreductase family. In terms of assembly, homodimer. Requires FAD as cofactor.

Serves to protect the cell against DNA damage by alkyl hydroperoxides. It can use either NADH or NADPH as electron donor for direct reduction of redox dyes or of alkyl hydroperoxides when combined with the AhpC protein. This Pseudomonas putida (Arthrobacter siderocapsulatus) protein is Alkyl hydroperoxide reductase subunit F (ahpF).